The chain runs to 349 residues: Magnesium-protoporphyrin IX monomethyl ester [oxidative] cyclase (349 aa).

Low complexity predominate over residues 1–10; that stretch reads MTATTATAPA. A disordered region spans residues 1–23; sequence MTATTATAPAMRGGGRNELPPHL.

This sequence belongs to the AcsF family. Fe cation is required as a cofactor.

It catalyses the reaction Mg-protoporphyrin IX 13-monomethyl ester + 3 NADPH + 3 O2 + 2 H(+) = 3,8-divinyl protochlorophyllide a + 3 NADP(+) + 5 H2O. It participates in porphyrin-containing compound metabolism; chlorophyll biosynthesis (light-independent). Catalyzes the formation of the isocyclic ring in chlorophyll biosynthesis. Mediates the cyclase reaction, which results in the formation of divinylprotochlorophyllide (Pchlide) characteristic of all chlorophylls from magnesium-protoporphyrin IX 13-monomethyl ester (MgPMME). The chain is Magnesium-protoporphyrin IX monomethyl ester [oxidative] cyclase from Prochlorococcus marinus (strain MIT 9303).